The primary structure comprises 476 residues: Probable cytosolic Fe-S cluster assembly factor GJ13047 (476 aa).

[4Fe-4S] cluster is bound by residues cysteine 23, cysteine 68, cysteine 71, cysteine 74, cysteine 187, cysteine 243, cysteine 395, and cysteine 399.

This sequence belongs to the NARF family.

Its function is as follows. Component of the cytosolic iron-sulfur (Fe/S) protein assembly machinery. Required for maturation of extramitochondrial Fe/S proteins. This is Probable cytosolic Fe-S cluster assembly factor GJ13047 from Drosophila virilis (Fruit fly).